The sequence spans 130 residues: Small ribosomal subunit protein uS9 (130 aa).

It belongs to the universal ribosomal protein uS9 family.

The chain is Small ribosomal subunit protein uS9 from Acidovorax ebreus (strain TPSY) (Diaphorobacter sp. (strain TPSY)).